The chain runs to 127 residues: Histone H2B type 1-A (127 aa).

Positions 1–36 are disordered; sequence MPEVSSKGATISKKGFKKAVVKTQKKEGKKRKRTRK. Position 2 is an N-acetylproline (Pro2). N6-acetyllysine; alternate occurs at positions 7, 13, 14, 17, 18, 22, and 25. Lys7, Lys13, Lys14, Lys17, Lys18, Lys22, Lys25, and Lys36 each carry N6-crotonyllysine; alternate. 2 positions are modified to N6-lactoyllysine; alternate: Lys7 and Lys13. Residue Lys7 forms a Glycyl lysine isopeptide (Lys-Gly) (interchain with G-Cter in SUMO2); alternate linkage. N6-lactoyllysine; alternate is present on residues Lys17, Lys18, Lys22, and Lys25. Residue Lys22 forms a Glycyl lysine isopeptide (Lys-Gly) (interchain with G-Cter in SUMO2); alternate linkage. At Lys36 the chain carries N6-succinyllysine; alternate. Residue Lys36 forms a Glycyl lysine isopeptide (Lys-Gly) (interchain with G-Cter in ubiquitin); alternate linkage. At Ser38 the chain carries Phosphoserine. Lys45 carries the post-translational modification N6-lactoyllysine; alternate. N6-methyllysine is present on Lys48. An N6,N6-dimethyllysine modification is found at Lys59. The residue at position 81 (Arg81) is a Dimethylated arginine. Ser86 carries the post-translational modification Phosphoserine. An N6-acetyllysine; alternate modification is found at Lys87. Residue Lys87 is modified to N6-lactoyllysine; alternate. N6,N6,N6-trimethyllysine; alternate is present on Lys87. An omega-N-methylarginine mark is found at Arg88 and Arg94. At Lys110 the chain carries N6-lactoyllysine; alternate. Lys110 carries the N6-methyllysine modification. Thr117 carries the phosphothreonine modification. An N6-lactoyllysine; alternate mark is found at Lys118 and Lys122. Residues Lys118 and Lys122 each carry the N6-succinyllysine; alternate modification. Position 118 is an N6-methylated lysine; alternate (Lys118). Residue Lys122 forms a Glycyl lysine isopeptide (Lys-Gly) (interchain with G-Cter in ubiquitin); alternate linkage.

The protein belongs to the histone H2B family. The nucleosome is a histone octamer containing two molecules each of H2A, H2B, H3 and H4 assembled in one H3-H4 heterotetramer and two H2A-H2B heterodimers. Monoubiquitination at Lys-36 (H2BK34Ub) by the MSL1/MSL2 dimer is required for histone H3 'Lys-4' (H3K4me) and 'Lys-79' (H3K79me) methylation and transcription activation at specific gene loci, such as HOXA9 and MEIS1 loci. Similarly, monoubiquitination at Lys-122 (H2BK120Ub) by the RNF20/40 complex gives a specific tag for epigenetic transcriptional activation and is also prerequisite for histone H3 'Lys-4' and 'Lys-79' methylation. It also functions cooperatively with the FACT dimer to stimulate elongation by RNA polymerase II. H2BK120Ub also acts as a regulator of mRNA splicing: deubiquitination by USP49 is required for efficient cotranscriptional splicing of a large set of exons. Post-translationally, crotonylation (Kcr) is specifically present in male germ cells and marks testis-specific genes in post-meiotic cells, including X-linked genes that escape sex chromosome inactivation in haploid cells. Crotonylation marks active promoters and enhancers and confers resistance to transcriptional repressors. It is also associated with post-meiotically activated genes on autosomes. In terms of processing, acetylated during spermatogenesis. Acetylated form is most abundant in spermatogonia compared to spermatocytes and round spermatids. Phosphorylated at Thr-117 in spermatogonia, spermatocytes and round spermatids. Post-translationally, methylated at Lys-118 in spermatogonia, spermatocytes and round spermatids. In terms of processing, lactylated in macrophages by EP300/P300 by using lactoyl-CoA directly derived from endogenous or exogenous lactate, leading to stimulates gene transcription. As to expression, mainly expressed in testis, and the corresponding protein is also present in mature sperm (at protein level). Also found in some fat cells.

It localises to the nucleus. The protein localises to the chromosome. Variant histone specifically required to direct the transformation of dissociating nucleosomes to protamine in male germ cells. Entirely replaces classical histone H2B prior nucleosome to protamine transition and probably acts as a nucleosome dissociating factor that creates a more dynamic chromatin, facilitating the large-scale exchange of histones. Core component of nucleosome. Nucleosomes wrap and compact DNA into chromatin, limiting DNA accessibility to the cellular machineries which require DNA as a template. Histones thereby play a central role in transcription regulation, DNA repair, DNA replication and chromosomal stability. DNA accessibility is regulated via a complex set of post-translational modifications of histones, also called histone code, and nucleosome remodeling. Also found in fat cells, its function and the presence of post-translational modifications specific to such cells are still unclear. The polypeptide is Histone H2B type 1-A (Homo sapiens (Human)).